The chain runs to 576 residues: Sulfite reductase [NADPH] hemoprotein beta-component (576 aa).

Basic and acidic residues predominate over residues 1–12; sequence MNVKTEPDRSRD. A disordered region spans residues 1-25; that stretch reads MNVKTEPDRSRDVSQPLDKLGPDET. The [4Fe-4S] cluster site is built by Cys441, Cys447, Cys486, and Cys490. Cys490 contacts siroheme.

The protein belongs to the nitrite and sulfite reductase 4Fe-4S domain family. In terms of assembly, alpha(8)-beta(8). The alpha component is a flavoprotein, the beta component is a hemoprotein. Requires siroheme as cofactor. [4Fe-4S] cluster serves as cofactor.

The enzyme catalyses hydrogen sulfide + 3 NADP(+) + 3 H2O = sulfite + 3 NADPH + 4 H(+). It functions in the pathway sulfur metabolism; hydrogen sulfide biosynthesis; hydrogen sulfide from sulfite (NADPH route): step 1/1. Its function is as follows. Component of the sulfite reductase complex that catalyzes the 6-electron reduction of sulfite to sulfide. This is one of several activities required for the biosynthesis of L-cysteine from sulfate. The chain is Sulfite reductase [NADPH] hemoprotein beta-component from Nitrobacter hamburgensis (strain DSM 10229 / NCIMB 13809 / X14).